Here is a 123-residue protein sequence, read N- to C-terminus: Small ribosomal subunit protein uS12 (123 aa).

The interval 1–32 (MPTIQQLVRKGRKDKKAKVKTAALKGSPQRRG) is disordered. The span at 9 to 19 (RKGRKDKKAKV) shows a compositional bias: basic residues. Asp89 is subject to 3-methylthioaspartic acid.

It belongs to the universal ribosomal protein uS12 family. As to quaternary structure, part of the 30S ribosomal subunit. Contacts proteins S8 and S17. May interact with IF1 in the 30S initiation complex.

Its function is as follows. With S4 and S5 plays an important role in translational accuracy. Functionally, interacts with and stabilizes bases of the 16S rRNA that are involved in tRNA selection in the A site and with the mRNA backbone. Located at the interface of the 30S and 50S subunits, it traverses the body of the 30S subunit contacting proteins on the other side and probably holding the rRNA structure together. The combined cluster of proteins S8, S12 and S17 appears to hold together the shoulder and platform of the 30S subunit. This Corynebacterium kroppenstedtii (strain DSM 44385 / JCM 11950 / CIP 105744 / CCUG 35717) protein is Small ribosomal subunit protein uS12.